Here is a 325-residue protein sequence, read N- to C-terminus: Brorin (325 aa).

A signal peptide spans 1 to 27 (MPSSTAMAVGALSSSLLVTCCLMVALC). Residues 37–121 (AQAPEQPGQE…RPRGDTPQAE (85 aa)) form a disordered region. Composition is skewed to basic and acidic residues over residues 44 to 56 (GQEK…RDGP) and 64 to 78 (RPAR…DWKS). Residues 114 to 116 (RGD) carry the Mediates cell adhesion motif. VWFC domains are found at residues 153-212 (KGCV…PQCK) and 216-274 (NYCE…PICK).

As to quaternary structure, peripherally associated with AMPAR complex. AMPAR complex consists of an inner core made of 4 pore-forming GluA/GRIA proteins (GRIA1, GRIA2, GRIA3 and GRIA4) and 4 major auxiliary subunits arranged in a twofold symmetry. One of the two pairs of distinct binding sites is occupied either by CNIH2, CNIH3 or CACNG2, CACNG3. The other harbors CACNG2, CACNG3, CACNG4, CACNG8 or GSG1L. This inner core of AMPAR complex is complemented by outer core constituents binding directly to the GluA/GRIA proteins at sites distinct from the interaction sites of the inner core constituents. Outer core constituents include at least PRRT1, PRRT2, CKAMP44/SHISA9, FRRS1L and NRN1. The proteins of the inner and outer core serve as a platform for other, more peripherally associated AMPAR constituents, including VWC2. Alone or in combination, these auxiliary subunits control the gating and pharmacology of the AMPAR complex and profoundly impact their biogenesis and protein processing.

It localises to the secreted. It is found in the extracellular space. Its subcellular location is the extracellular matrix. The protein resides in the basement membrane. The protein localises to the synapse. Functionally, BMP antagonist which may play a role in neural development. Promotes cell adhesion. The polypeptide is Brorin (VWC2) (Homo sapiens (Human)).